A 599-amino-acid polypeptide reads, in one-letter code: Elongation factor 4 (599 aa).

Residues 2-184 (KNIRNFSIIA…RLVRDIPPPE (183 aa)) form the tr-type G domain. GTP contacts are provided by residues 14 to 19 (DHGKST) and 131 to 134 (NKID).

It belongs to the TRAFAC class translation factor GTPase superfamily. Classic translation factor GTPase family. LepA subfamily.

The protein localises to the cell inner membrane. It catalyses the reaction GTP + H2O = GDP + phosphate + H(+). Required for accurate and efficient protein synthesis under certain stress conditions. May act as a fidelity factor of the translation reaction, by catalyzing a one-codon backward translocation of tRNAs on improperly translocated ribosomes. Back-translocation proceeds from a post-translocation (POST) complex to a pre-translocation (PRE) complex, thus giving elongation factor G a second chance to translocate the tRNAs correctly. Binds to ribosomes in a GTP-dependent manner. In Escherichia coli (strain UTI89 / UPEC), this protein is Elongation factor 4.